Consider the following 107-residue polypeptide: Sulfurtransferase Alvin_2599 (107 aa).

Positions D16–A104 constitute a Rhodanese domain. C64 serves as the catalytic Cysteine persulfide intermediate.

Monomer.

The protein resides in the cytoplasm. It participates in energy metabolism; sulfur metabolism. Functionally, sulfur carrier protein involved in sulfur trafficking for oxidative dissimilatory sulfur metabolism. Component of a sulfur relay system that starts with the sulfur-mobilizing rhodanese-like protein Rhd_2599 (Alvin_2599), which transfers the sulfur from a low-molecular-weight thiol, maybe glutathione, to the TusA protein (Alvin_2600); TusA serves as the sulfur donor for DsrEFH, which persulfurates DsrC; persulfurated DsrC very probably serves as a direct substrate for reverse-acting sulfite reductase, DsrAB. Is able to catalyze the sulfur transfer reaction from thiosulfate or glutathione (GSSH) to cyanide in vitro, however, thiosulfate is unlikely an in vivo substrate. This is Sulfurtransferase Alvin_2599 from Allochromatium vinosum (strain ATCC 17899 / DSM 180 / NBRC 103801 / NCIMB 10441 / D) (Chromatium vinosum).